The primary structure comprises 177 residues: uncharacterized protein (177 aa).

Transmembrane regions (helical) follow at residues 20–42 (NLVSYAVGGILAIAGYVLILLAL), 62–84 (VVLWIIAVLIVIFAVGISFVSLS), 94–116 (AMSSFLVGVILFYILSVIGGYFI), and 136–158 (GLLYFIGTLLLIVIVGIIVIIVA).

It is found in the cell membrane. This is an uncharacterized protein from Methanocaldococcus jannaschii (strain ATCC 43067 / DSM 2661 / JAL-1 / JCM 10045 / NBRC 100440) (Methanococcus jannaschii).